We begin with the raw amino-acid sequence, 741 residues long: NAD(P)H-quinone oxidoreductase subunit 5, chloroplastic (741 aa).

16 consecutive transmembrane segments (helical) span residues 9–29 (WIIP…LLLF), 40–60 (WAFQ…NLSI), 89–109 (IDPL…MVLI), 125–145 (FAYM…SNLI), 147–167 (IYIF…FWFT), 185–205 (GDFG…SFEF), 219–239 (NEVN…GAIA), 258–278 (TPIS…FLVA), 283–303 (LFIV…ITVF), 327–347 (LGYM…FHLI), 354–374 (ALLF…VGYC), 396–416 (NSFL…CFWS), 425–445 (WLYS…TAFY), 549–569 (LFPI…GIPF), 605–625 (FFSV…YKPV), and 721–741 (YLFF…FFNL).

The protein belongs to the complex I subunit 5 family. As to quaternary structure, NDH is composed of at least 16 different subunits, 5 of which are encoded in the nucleus.

Its subcellular location is the plastid. The protein localises to the chloroplast thylakoid membrane. It carries out the reaction a plastoquinone + NADH + (n+1) H(+)(in) = a plastoquinol + NAD(+) + n H(+)(out). It catalyses the reaction a plastoquinone + NADPH + (n+1) H(+)(in) = a plastoquinol + NADP(+) + n H(+)(out). In terms of biological role, NDH shuttles electrons from NAD(P)H:plastoquinone, via FMN and iron-sulfur (Fe-S) centers, to quinones in the photosynthetic chain and possibly in a chloroplast respiratory chain. The immediate electron acceptor for the enzyme in this species is believed to be plastoquinone. Couples the redox reaction to proton translocation, and thus conserves the redox energy in a proton gradient. This chain is NAD(P)H-quinone oxidoreductase subunit 5, chloroplastic (ndhF), found in Cichorium intybus (Chicory).